We begin with the raw amino-acid sequence, 95 residues long: Aspartyl/glutamyl-tRNA(Asn/Gln) amidotransferase subunit C (95 aa).

It belongs to the GatC family. In terms of assembly, heterotrimer of A, B and C subunits.

The catalysed reaction is L-glutamyl-tRNA(Gln) + L-glutamine + ATP + H2O = L-glutaminyl-tRNA(Gln) + L-glutamate + ADP + phosphate + H(+). It carries out the reaction L-aspartyl-tRNA(Asn) + L-glutamine + ATP + H2O = L-asparaginyl-tRNA(Asn) + L-glutamate + ADP + phosphate + 2 H(+). In terms of biological role, allows the formation of correctly charged Asn-tRNA(Asn) or Gln-tRNA(Gln) through the transamidation of misacylated Asp-tRNA(Asn) or Glu-tRNA(Gln) in organisms which lack either or both of asparaginyl-tRNA or glutaminyl-tRNA synthetases. The reaction takes place in the presence of glutamine and ATP through an activated phospho-Asp-tRNA(Asn) or phospho-Glu-tRNA(Gln). In Desulfosudis oleivorans (strain DSM 6200 / JCM 39069 / Hxd3) (Desulfococcus oleovorans), this protein is Aspartyl/glutamyl-tRNA(Asn/Gln) amidotransferase subunit C.